Consider the following 840-residue polypeptide: Protein translocase subunit SecA (840 aa).

ATP-binding positions include Gln-87, 105–109 (GEGKT), and Asp-494. Positions 791 to 840 (LRKEQEDQPMFFGPAEGAGQKPQTRKDRKVGRNDPCPCGSGKKYKKCCGK) are disordered. Residues Cys-826, Cys-828, Cys-837, and Cys-838 each contribute to the Zn(2+) site.

This sequence belongs to the SecA family. Monomer and homodimer. Part of the essential Sec protein translocation apparatus which comprises SecA, SecYEG and auxiliary proteins SecDF-YajC and YidC. Zn(2+) is required as a cofactor.

The protein resides in the cell inner membrane. It is found in the cytoplasm. The enzyme catalyses ATP + H2O + cellular proteinSide 1 = ADP + phosphate + cellular proteinSide 2.. In terms of biological role, part of the Sec protein translocase complex. Interacts with the SecYEG preprotein conducting channel. Has a central role in coupling the hydrolysis of ATP to the transfer of proteins into and across the cell membrane, serving as an ATP-driven molecular motor driving the stepwise translocation of polypeptide chains across the membrane. The protein is Protein translocase subunit SecA of Syntrophobacter fumaroxidans (strain DSM 10017 / MPOB).